The primary structure comprises 114 residues: Chaperonin GroEL (114 aa).

Residue 22–26 participates in ATP binding; it reads DGTTT.

It belongs to the chaperonin (HSP60) family. As to quaternary structure, forms a cylinder of 14 subunits composed of two heptameric rings stacked back-to-back. Interacts with the co-chaperonin GroES.

It localises to the cytoplasm. The catalysed reaction is ATP + H2O + a folded polypeptide = ADP + phosphate + an unfolded polypeptide.. Its function is as follows. Together with its co-chaperonin GroES, plays an essential role in assisting protein folding. The GroEL-GroES system forms a nano-cage that allows encapsulation of the non-native substrate proteins and provides a physical environment optimized to promote and accelerate protein folding. This Mycobacterium ulcerans protein is Chaperonin GroEL.